The sequence spans 484 residues: ATP synthase subunit beta (484 aa).

Position 152–159 (152–159 (GGAGVGKT)) interacts with ATP.

Belongs to the ATPase alpha/beta chains family. F-type ATPases have 2 components, CF(1) - the catalytic core - and CF(0) - the membrane proton channel. CF(1) has five subunits: alpha(3), beta(3), gamma(1), delta(1), epsilon(1). CF(0) has three main subunits: a(1), b(2) and c(9-12). The alpha and beta chains form an alternating ring which encloses part of the gamma chain. CF(1) is attached to CF(0) by a central stalk formed by the gamma and epsilon chains, while a peripheral stalk is formed by the delta and b chains.

It is found in the cell inner membrane. The catalysed reaction is ATP + H2O + 4 H(+)(in) = ADP + phosphate + 5 H(+)(out). Its function is as follows. Produces ATP from ADP in the presence of a proton gradient across the membrane. The catalytic sites are hosted primarily by the beta subunits. In Campylobacter lari (strain RM2100 / D67 / ATCC BAA-1060), this protein is ATP synthase subunit beta.